A 1513-amino-acid polypeptide reads, in one-letter code: MAERANLVFQNKEIDGTAMKRLISRLIDHFGMGYTSHILDQIKTLGFHQATTTSISLGIEDLLTIPSKGWLVQDAEQQSFLLEKHYYYGAVHAVEKLRQSVEIWYATSEYLKHEMNSNFRITDPSNPVYLMSFSGARGNASQVHQLVGMRGLMADPQGQMIDLPIQSNLREGLSLTEYIISCYGARKGVVDTAVRTADAGYLTRRLVEVVQHIIVRRRDCGTIQAISVSPQNGMTEKLFVQTLIGRVLANDIYIGSRCIATRNQDIGIGLVNRFITTFRAQPFRAQPIYIRTPFTCRSTSWICQLCYGRSSTHGDLVELGEAVGVIAGQSIGEPGTQLTLRTFHTGGVFTGGTADLVRSPSNGKIQFNGDLVHPTRTRHGQPAFLCYIDLHITIQSQDILHSVTIPSKSLILVQNDQYVESEQVIAEIRAGTSALHFKEKVQKHIYSESDGEMHWSTDVYHAPEYQYGNLRRLPKTSHLWILSVSMCRSSIASFSLHKDQDQMNTYSFSVDGRYIFGLSMADDEVRHRLLDTFGKKDREILDYSTPDRIMSNGHWNFVYPSILQNNFDLLAKKRRNRFAIPLQYHQEQEKEPISCFGISIEIPFMGVLRRNTIVAYFDDPRYKKDKKGSGIVKFRYRTLEDEYRTREKDSENEYGSPENEYRTREEECKTLEDEYRTREEEYETLEDEYGIPENEYETLEDEYGILEDEYRTREEESEDEYGSPENKYRPREDKYGTLEEDSEDEHGTLEEDSEEDSEDEYGNPEEDSVLKKGVLIEHRGTKEFSLKYQKEVDRFFFILQELHILPRSSSLKVLDNSIIGVDTQLTKNTRSRLGGLVRVKRKKSHTELKIFSGDIHFPEEADKILGGSLIPLEREKKDSKESKKRENWVYVQWKKILKSKEKYFVLVRPAVAYEMNEGRNLATLFPQDLLQEEGNLQLRLVNFISHENSKLTQRIYHTNSQFVRTCLVLNWEQEEKEEARASLVEIRANGLIRDFLRIGLIKSTISYTRKRYDSRSAGLILHNRLDRTNTNSFYSKAKIQSLSQHQEAIGTLLNRNKEYQSLMVLSASNCSRIGFFKNSKNPNGVKESNPRIPIPKFWGLFRNFSGLLGTIAPSISNFSSSYYLLTYNQILLKKHLLLDNLKQNFKVLQGLKHSLINENQRTSNFDSNIMLDPFQLNWHFLPHDSWEETSAKIHLGQFICENVCLFKSHIKKSGQIFIVNIDSFVIRAAKPYLATTGATVHGHYGEILYKGDRLVTFIYEKARSSDITQGLPKVEQIFEARSIDSLSPNLERRIEDWNERIPRILGGPWGFLIGAELTIAQSRISLVNKIQKVYRSQGVQIHNRHIEIIIRQVTSKVRVSEDGMSNVFSPGELIGLLRAERAGRALDESIYYRAILLGITRVSLNTQSFISEASFQETARVLAKAALRGRIDWLKGLKENVVLGGIIPVGTGFQKFVHRYPQNKNLYFEIQKKKLFASEMRDILFLHTELVSSDSDVTNNFYETSESPFTPFI.

Zn(2+) contacts are provided by C220, C296, C303, and C306. The segment at 644–769 is disordered; sequence RTREKDSENE…EYGNPEEDSV (126 aa). Residues 659–679 show a composition bias toward basic and acidic residues; that stretch reads NEYRTREEECKTLEDEYRTRE. A compositionally biased stretch (acidic residues) spans 680–707; sequence EEYETLEDEYGIPENEYETLEDEYGILE. Basic and acidic residues predominate over residues 726–737; the sequence is NKYRPREDKYGT. Positions 738–767 are enriched in acidic residues; it reads LEEDSEDEHGTLEEDSEEDSEDEYGNPEED.

The protein belongs to the RNA polymerase beta' chain family. RpoC2 subfamily. In terms of assembly, in plastids the minimal PEP RNA polymerase catalytic core is composed of four subunits: alpha, beta, beta', and beta''. When a (nuclear-encoded) sigma factor is associated with the core the holoenzyme is formed, which can initiate transcription. Requires Zn(2+) as cofactor.

Its subcellular location is the plastid. The protein resides in the chloroplast. It catalyses the reaction RNA(n) + a ribonucleoside 5'-triphosphate = RNA(n+1) + diphosphate. DNA-dependent RNA polymerase catalyzes the transcription of DNA into RNA using the four ribonucleoside triphosphates as substrates. The sequence is that of DNA-directed RNA polymerase subunit beta'' from Oryza sativa (Rice).